We begin with the raw amino-acid sequence, 352 residues long: Anthranilate phosphoribosyltransferase (352 aa).

5-phospho-alpha-D-ribose 1-diphosphate contacts are provided by residues Gly91, 94-95, Thr99, 101-104, 119-127, and Ser131; these read GD, NIST, and KHGNRASSS. Anthranilate is bound at residue Gly91. Ser103 is a Mg(2+) binding site. Residue Asn122 coordinates anthranilate. Residue Arg177 coordinates anthranilate. 2 residues coordinate Mg(2+): Asp235 and Glu236.

It belongs to the anthranilate phosphoribosyltransferase family. Homodimer. The cofactor is Mg(2+).

The catalysed reaction is N-(5-phospho-beta-D-ribosyl)anthranilate + diphosphate = 5-phospho-alpha-D-ribose 1-diphosphate + anthranilate. The protein operates within amino-acid biosynthesis; L-tryptophan biosynthesis; L-tryptophan from chorismate: step 2/5. Functionally, catalyzes the transfer of the phosphoribosyl group of 5-phosphorylribose-1-pyrophosphate (PRPP) to anthranilate to yield N-(5'-phosphoribosyl)-anthranilate (PRA). This chain is Anthranilate phosphoribosyltransferase, found in Arthrobacter sp. (strain FB24).